The following is a 465-amino-acid chain: 5'-adenylylsulfate reductase 1, chloroplastic (465 aa).

The N-terminal 53 residues, 1 to 53, are a transit peptide targeting the chloroplast; that stretch reads MAMSVNVSSSSSSGIINSRFGVSLEPKVSQIGSLRLLDRVHVAPVSLNLSGKR. Residues 73–327 are reductase domain; the sequence is LAATMVAEIA…KAKECGLHKG (255 aa). The 122-residue stretch at 344–465 folds into the Thioredoxin domain; it reads SAVADIFKSE…SLTSFLNLVR (122 aa). Catalysis depends on nucleophile residues C385 and C388. A disulfide bond links C385 and C388.

This sequence belongs to the APS reductase family. It depends on [4Fe-4S] cluster as a cofactor. In terms of tissue distribution, leaves, roots and stem.

It localises to the plastid. Its subcellular location is the chloroplast. The catalysed reaction is glutathione disulfide + sulfite + AMP + 2 H(+) = adenosine 5'-phosphosulfate + 2 glutathione. Stimulated by sodium sulfate &gt; ammonium sulfate and is sensitive to inactivation by 5'AMP. In terms of biological role, reduces sulfate for Cys biosynthesis. Substrate preference is adenosine-5'-phosphosulfate (APS) &gt;&gt; 3'-phosphoadenosine-5'-phosphosulfate (PAPS). Uses glutathione or DTT as source of protons. The chain is 5'-adenylylsulfate reductase 1, chloroplastic (APR1) from Arabidopsis thaliana (Mouse-ear cress).